The following is a 148-amino-acid chain: SPbeta prophage-derived disulfide bond formation protein B (148 aa).

A helical membrane pass occupies residues Lys7–Phe26. A disulfide bridge links Cys36 with Cys39. Transmembrane regions (helical) follow at residues Tyr41–Lys60 and Tyr67–Ile84. Cys95 and Cys102 are oxidised to a cystine. Residues Gly111–Ile135 traverse the membrane as a helical segment.

It belongs to the DsbB family. BdbC subfamily.

It is found in the cell membrane. Functionally, important but not absolutely essential for the production of the lantibiotic sublancin 168, it may also be required for the stability of other secreted proteins. Not required for competence for DNA uptake. The chain is SPbeta prophage-derived disulfide bond formation protein B (bdbB) from Bacillus subtilis (strain 168).